A 78-amino-acid polypeptide reads, in one-letter code: Metallothionein-like protein type 2 (78 aa).

The protein belongs to the metallothionein superfamily. Type 15 family.

In terms of biological role, metallothioneins have a high content of cysteine residues that bind various heavy metals. This is Metallothionein-like protein type 2 from Musa acuminata (Banana).